The sequence spans 316 residues: Ribosomal RNA small subunit methyltransferase H (316 aa).

Residues 35-37 (AGH), D55, F84, D105, and Q112 contribute to the S-adenosyl-L-methionine site.

The protein belongs to the methyltransferase superfamily. RsmH family.

It is found in the cytoplasm. It catalyses the reaction cytidine(1402) in 16S rRNA + S-adenosyl-L-methionine = N(4)-methylcytidine(1402) in 16S rRNA + S-adenosyl-L-homocysteine + H(+). Specifically methylates the N4 position of cytidine in position 1402 (C1402) of 16S rRNA. This is Ribosomal RNA small subunit methyltransferase H from Streptococcus pneumoniae (strain 70585).